We begin with the raw amino-acid sequence, 171 residues long: 6,7-dimethyl-8-ribityllumazine synthase (171 aa).

5-amino-6-(D-ribitylamino)uracil contacts are provided by residues Phe-24, 58–60, and 82–84; these read ALE and AVI. 87–88 contributes to the (2S)-2-hydroxy-3-oxobutyl phosphate binding site; the sequence is ET. His-90 functions as the Proton donor in the catalytic mechanism. Asn-115 lines the 5-amino-6-(D-ribitylamino)uracil pocket. Arg-129 is a (2S)-2-hydroxy-3-oxobutyl phosphate binding site. Residues 150–171 form a disordered region; sequence ALDQLGDDEDEEEDEEDEEERA. A compositionally biased stretch (acidic residues) spans 154-171; sequence LGDDEDEEEDEEDEEERA.

Belongs to the DMRL synthase family.

The catalysed reaction is (2S)-2-hydroxy-3-oxobutyl phosphate + 5-amino-6-(D-ribitylamino)uracil = 6,7-dimethyl-8-(1-D-ribityl)lumazine + phosphate + 2 H2O + H(+). It participates in cofactor biosynthesis; riboflavin biosynthesis; riboflavin from 2-hydroxy-3-oxobutyl phosphate and 5-amino-6-(D-ribitylamino)uracil: step 1/2. Functionally, catalyzes the formation of 6,7-dimethyl-8-ribityllumazine by condensation of 5-amino-6-(D-ribitylamino)uracil with 3,4-dihydroxy-2-butanone 4-phosphate. This is the penultimate step in the biosynthesis of riboflavin. This chain is 6,7-dimethyl-8-ribityllumazine synthase, found in Burkholderia ambifaria (strain MC40-6).